Reading from the N-terminus, the 221-residue chain is Germin-like protein subfamily 1 member 15 (221 aa).

A signal peptide spans 1 to 21 (MKVSMSLILITFWALVTIAKA). Cys31 and Cys48 form a disulfide bridge. The region spanning 62-213 (SGLNQAGITN…AFQLDVNVVK (152 aa)) is the Cupin type-1 domain. Residue Asn77 is glycosylated (N-linked (GlcNAc...) asparagine). Residues His110, His112, Glu117, and His159 each coordinate Mn(2+).

The protein belongs to the germin family. Oligomer (believed to be a pentamer but probably hexamer).

It is found in the secreted. The protein resides in the extracellular space. The protein localises to the apoplast. Its function is as follows. May play a role in plant defense. Probably has no oxalate oxidase activity even if the active site is conserved. This Arabidopsis thaliana (Mouse-ear cress) protein is Germin-like protein subfamily 1 member 15.